Reading from the N-terminus, the 370-residue chain is Queuine tRNA-ribosyltransferase (370 aa).

Asp89 (proton acceptor) is an active-site residue. Substrate is bound by residues 89–93, Asp143, Gln185, and Gly212; that span reads DSGGF. The RNA binding stretch occupies residues 243–249; sequence GVGTPED. The active-site Nucleophile is Asp262. Residues 267-271 form an RNA binding; important for wobble base 34 recognition region; it reads TRNAR. Positions 300, 302, 305, and 331 each coordinate Zn(2+).

The protein belongs to the queuine tRNA-ribosyltransferase family. In terms of assembly, homodimer. Within each dimer, one monomer is responsible for RNA recognition and catalysis, while the other monomer binds to the replacement base PreQ1. Zn(2+) serves as cofactor.

The catalysed reaction is 7-aminomethyl-7-carbaguanine + guanosine(34) in tRNA = 7-aminomethyl-7-carbaguanosine(34) in tRNA + guanine. The protein operates within tRNA modification; tRNA-queuosine biosynthesis. Catalyzes the base-exchange of a guanine (G) residue with the queuine precursor 7-aminomethyl-7-deazaguanine (PreQ1) at position 34 (anticodon wobble position) in tRNAs with GU(N) anticodons (tRNA-Asp, -Asn, -His and -Tyr). Catalysis occurs through a double-displacement mechanism. The nucleophile active site attacks the C1' of nucleotide 34 to detach the guanine base from the RNA, forming a covalent enzyme-RNA intermediate. The proton acceptor active site deprotonates the incoming PreQ1, allowing a nucleophilic attack on the C1' of the ribose to form the product. After dissociation, two additional enzymatic reactions on the tRNA convert PreQ1 to queuine (Q), resulting in the hypermodified nucleoside queuosine (7-(((4,5-cis-dihydroxy-2-cyclopenten-1-yl)amino)methyl)-7-deazaguanosine). The polypeptide is Queuine tRNA-ribosyltransferase (Methylobacillus flagellatus (strain ATCC 51484 / DSM 6875 / VKM B-1610 / KT)).